The sequence spans 320 residues: Ferrochelatase (320 aa).

Residues His194 and Glu275 each coordinate Fe cation.

Belongs to the ferrochelatase family.

The protein localises to the cytoplasm. It carries out the reaction heme b + 2 H(+) = protoporphyrin IX + Fe(2+). It functions in the pathway porphyrin-containing compound metabolism; protoheme biosynthesis; protoheme from protoporphyrin-IX: step 1/1. Functionally, catalyzes the ferrous insertion into protoporphyrin IX. This is Ferrochelatase from Enterobacter sp. (strain 638).